The chain runs to 930 residues: Isoleucine--tRNA ligase (930 aa).

Residues 57 to 67 (PYANGNIHVGH) carry the 'HIGH' region motif. E554 serves as a coordination point for L-isoleucyl-5'-AMP. Residues 595–599 (KMSKS) carry the 'KMSKS' region motif. K598 is a binding site for ATP. Zn(2+)-binding residues include C888, C891, C908, and C911.

It belongs to the class-I aminoacyl-tRNA synthetase family. IleS type 1 subfamily. Monomer. It depends on Zn(2+) as a cofactor.

The protein localises to the cytoplasm. It catalyses the reaction tRNA(Ile) + L-isoleucine + ATP = L-isoleucyl-tRNA(Ile) + AMP + diphosphate. Its function is as follows. Catalyzes the attachment of isoleucine to tRNA(Ile). As IleRS can inadvertently accommodate and process structurally similar amino acids such as valine, to avoid such errors it has two additional distinct tRNA(Ile)-dependent editing activities. One activity is designated as 'pretransfer' editing and involves the hydrolysis of activated Val-AMP. The other activity is designated 'posttransfer' editing and involves deacylation of mischarged Val-tRNA(Ile). This chain is Isoleucine--tRNA ligase, found in Streptococcus mutans serotype c (strain ATCC 700610 / UA159).